The primary structure comprises 561 residues: Carbohydrate sulfotransferase 15 (561 aa).

Over 1 to 80 (MRHCINCCIQ…FLRFKKGKRC (80 aa)) the chain is Cytoplasmic. The chain crosses the membrane as a helical; Signal-anchor for type II membrane protein span at residues 81-101 (SLVFGLIIMTLVMASYILSGA). Residues 102–561 (HQELLISSPF…ADEAFAWKTT (460 aa)) are Lumenal-facing. 263 to 267 (KCGTT) contributes to the 3'-phosphoadenylyl sulfate binding site. N-linked (GlcNAc...) asparagine glycosylation is present at asparagine 364. Arginine 392 and serine 400 together coordinate 3'-phosphoadenylyl sulfate.

It belongs to the sulfotransferase 1 family. As to quaternary structure, homodimer; disulfide-linked (Potential). The relevance of homodimerization is however unsure. May interact with phosphorylated proteins in resting B-cells, including HCK. The cofactor is a divalent metal cation. It depends on glutathione as a cofactor. Glycosylated. As to expression, expressed in B-cell-enriched tissues but not in fetal or adult thymus. Expressed in fetal and adult spleen, lymph node, tonsil, bone marrow and peripheral leukocytes. Not expressed in T-cells. In pro-B, pre-B, and mature B-cell lines, it colocalizes with RAG1.

It localises to the golgi apparatus membrane. The enzyme catalyses dermatan 4'-sulfate + n 3'-phosphoadenylyl sulfate = dermatan 4',6'-bissulfate + n adenosine 3',5'-bisphosphate + n H(+). The catalysed reaction is chondroitin 4'-sulfate + n 3'-phosphoadenylyl sulfate = chondroitin 4',6'-bissulfate + n adenosine 3',5'-bisphosphate + n H(+). Inhibited by phenyl beta-GalNAc(4,6-SO(4)). Sulfotransferase that transfers sulfate from 3'-phosphoadenosine 5'-phosphosulfate (PAPS) to the C-6 hydroxyl group of the GalNAc 4-sulfate residue of chondroitin sulfate A and forms chondroitin sulfate E containing GlcA-GalNAc(4,6-SO(4)) repeating units. It also transfers sulfate to a unique non-reducing terminal sequence, GalNAc(4SO4)-GlcA(2SO4)-GalNAc(6SO4), to yield a highly sulfated structure similar to the structure found in thrombomodulin chondroitin sulfate. May also act as a B-cell receptor involved in BCR ligation-mediated early activation that mediate regulatory signals key to B-cell development and/or regulation of B-cell-specific RAG expression; however such results are unclear in vivo. The sequence is that of Carbohydrate sulfotransferase 15 (CHST15) from Homo sapiens (Human).